The chain runs to 229 residues: Small ribosomal subunit protein uS3 (229 aa).

The KH type-2 domain maps to 39-109 (MRKYIKEQLM…QVNIDIVEIR (71 aa)). The disordered stretch occupies residues 210–229 (VVSQQNSRPSGPRGPRRPRA).

The protein belongs to the universal ribosomal protein uS3 family. As to quaternary structure, part of the 30S ribosomal subunit. Forms a tight complex with proteins S10 and S14.

In terms of biological role, binds the lower part of the 30S subunit head. Binds mRNA in the 70S ribosome, positioning it for translation. This is Small ribosomal subunit protein uS3 from Akkermansia muciniphila (strain ATCC BAA-835 / DSM 22959 / JCM 33894 / BCRC 81048 / CCUG 64013 / CIP 107961 / Muc).